A 412-amino-acid polypeptide reads, in one-letter code: MTDIRELRKVVDRFRAQERKAAASINLVPSENKLSPLAQMPLSTDYYNRYFFNDELDPGFWQFRGGQEVAKIQTELARGHLSRLARAPYVNERPISGLSAMMMAMAGLGGPPGGTVVSIDAASGGHYATADMARRLGFESATVPVVRGRVDEQWFGQVLREHVPELVYLDLQNSRHELEVSRVAELIEAHSPHTILHVDCSHTMGLILGGALSNPLDAGAHTMGGSTHKSFPGPHKGVLFTRSPELHQRLKHAQFTMLSSHHFAETLALGLAAAEFRHFGHAYAEQVVANARLLGKLLAADGFDVTADENGHATSTHQLWVRIGDAEQTDRFSKYLYDHGIRVNVQVDLPGLPGPVLRLGVNELTFLGGHEAAVHALAEEFSHARDGVRRDGEGSQRVREQYGPPFYFVEFS.

The residue at position 229 (K229) is an N6-(pyridoxal phosphate)lysine.

Belongs to the SHMT family. Pyridoxal 5'-phosphate serves as cofactor.

It catalyses the reaction uridine-5'-aldehyde + L-threonine = (5'S,6'S)-C-glycyluridine + acetaldehyde. It participates in antibiotic biosynthesis. Its function is as follows. Transaldolase involved in the biosynthesis of the capuramycin-type nucleoside antibiotic A-503083. Catalyzes the condensation of L-threonine and uridine-5'-aldehyde to form 5'-C-glycyluridine (GlyU). Forms (5'S,6'S)-GlyU. The protein is L-threonine:uridine-5'-aldehyde transaldolase of Streptomyces sp.